Here is a 123-residue protein sequence, read N- to C-terminus: Small ribosomal subunit protein uS11 (123 aa).

It belongs to the universal ribosomal protein uS11 family. Part of the 30S ribosomal subunit. Interacts with proteins S7 and S18. Binds to IF-3.

Functionally, located on the platform of the 30S subunit, it bridges several disparate RNA helices of the 16S rRNA. Forms part of the Shine-Dalgarno cleft in the 70S ribosome. The chain is Small ribosomal subunit protein uS11 from Coxiella burnetii (strain CbuG_Q212) (Coxiella burnetii (strain Q212)).